Here is a 402-residue protein sequence, read N- to C-terminus: CCA-adding enzyme (402 aa).

Positions 32 and 35 each coordinate ATP. CTP is bound by residues glycine 32 and arginine 35. Mg(2+) is bound by residues aspartate 45 and aspartate 47. Positions 116, 159, 162, 165, and 168 each coordinate ATP. Arginine 116, aspartate 159, arginine 162, arginine 165, and arginine 168 together coordinate CTP.

Belongs to the tRNA nucleotidyltransferase/poly(A) polymerase family. Bacterial CCA-adding enzyme type 3 subfamily. As to quaternary structure, homodimer. Mg(2+) is required as a cofactor.

The catalysed reaction is a tRNA precursor + 2 CTP + ATP = a tRNA with a 3' CCA end + 3 diphosphate. It carries out the reaction a tRNA with a 3' CCA end + 2 CTP + ATP = a tRNA with a 3' CCACCA end + 3 diphosphate. Its function is as follows. Catalyzes the addition and repair of the essential 3'-terminal CCA sequence in tRNAs without using a nucleic acid template. Adds these three nucleotides in the order of C, C, and A to the tRNA nucleotide-73, using CTP and ATP as substrates and producing inorganic pyrophosphate. tRNA 3'-terminal CCA addition is required both for tRNA processing and repair. Also involved in tRNA surveillance by mediating tandem CCA addition to generate a CCACCA at the 3' terminus of unstable tRNAs. While stable tRNAs receive only 3'-terminal CCA, unstable tRNAs are marked with CCACCA and rapidly degraded. In Streptococcus thermophilus (strain CNRZ 1066), this protein is CCA-adding enzyme.